The sequence spans 482 residues: Membrane-bound lytic murein transglycosylase F (482 aa).

Residues 1-18 (MKGLFLRIITALALLFWA) form the signal peptide. Residues 19 to 267 (IDMVFPWQFL…NLKEKYLGHI (249 aa)) form a non-LT domain region. The interval 268–482 (SQFDYVDTRS…NLEEIKENKD (215 aa)) is LT domain. The active site involves Glu312. A compositionally biased stretch (polar residues) spans 457–470 (ENQTTNDNANNESA). Residues 457-482 (ENQTTNDNANNESAVKNLEEIKENKD) are disordered. Residues 473 to 482 (NLEEIKENKD) are compositionally biased toward basic and acidic residues.

This sequence in the N-terminal section; belongs to the bacterial solute-binding protein 3 family. It in the C-terminal section; belongs to the transglycosylase Slt family.

Its subcellular location is the cell outer membrane. The enzyme catalyses Exolytic cleavage of the (1-&gt;4)-beta-glycosidic linkage between N-acetylmuramic acid (MurNAc) and N-acetylglucosamine (GlcNAc) residues in peptidoglycan, from either the reducing or the non-reducing ends of the peptidoglycan chains, with concomitant formation of a 1,6-anhydrobond in the MurNAc residue.. Murein-degrading enzyme that degrades murein glycan strands and insoluble, high-molecular weight murein sacculi, with the concomitant formation of a 1,6-anhydromuramoyl product. Lytic transglycosylases (LTs) play an integral role in the metabolism of the peptidoglycan (PG) sacculus. Their lytic action creates space within the PG sacculus to allow for its expansion as well as for the insertion of various structures such as secretion systems and flagella. The sequence is that of Membrane-bound lytic murein transglycosylase F from Haemophilus influenzae (strain 86-028NP).